Consider the following 397-residue polypeptide: MSNSFVLVINSGSSSLKFAVINSVTGEAVLSGLGECFGLEDARMGWKYSGEKTEIAIEGEDNHHKIAIGKLVGLTEELGLTKDIVAVGHRIVHGGEKFTSTVRINEEVTAEIEKLADLAPLHNPAGAIGIRAAMEAFPALPQFAVFDTAFHQTMPKRAFTGAIANELYTDFGIRRYGFHGTSHYFVSREAAKMLNKPIEESSFISVHLGNGASVCAINNGESVDTSMGFTPLSGLMMGTRCGDLDPGIIEYLLKKGWSQEKVFNSLNKASGFLGVSGLTSDARGILEAMEQGHEGATLAFQVFTYRVAKYIASYLAALDSFDGIIFTGGIGENSLPIRREILKNLKLLGFVEDEKGNEDARFGNAGVIATSALLNAVAMVIPTNEEFVIAQQSVELL.

Mg(2+) is bound at residue Asn-10. Lys-17 contributes to the ATP binding site. Arg-90 provides a ligand contact to substrate. The Proton donor/acceptor role is filled by Asp-147. Residues 207 to 211 (HLGNG), 281 to 283 (DAR), and 329 to 333 (GIGEN) contribute to the ATP site. A Mg(2+)-binding site is contributed by Glu-385.

The protein belongs to the acetokinase family. Homodimer. It depends on Mg(2+) as a cofactor. Mn(2+) is required as a cofactor.

Its subcellular location is the cytoplasm. It carries out the reaction acetate + ATP = acetyl phosphate + ADP. Its pathway is metabolic intermediate biosynthesis; acetyl-CoA biosynthesis; acetyl-CoA from acetate: step 1/2. Catalyzes the formation of acetyl phosphate from acetate and ATP. Can also catalyze the reverse reaction. This is Acetate kinase 2 from Vibrio vulnificus (strain CMCP6).